The primary structure comprises 154 residues: NADPH-dependent 7-cyano-7-deazaguanine reductase (154 aa).

The active-site Thioimide intermediate is cysteine 52. The active-site Proton donor is aspartate 59. Substrate is bound by residues 74-76 (VES) and 93-94 (HE).

It belongs to the GTP cyclohydrolase I family. QueF type 1 subfamily.

It localises to the cytoplasm. The enzyme catalyses 7-aminomethyl-7-carbaguanine + 2 NADP(+) = 7-cyano-7-deazaguanine + 2 NADPH + 3 H(+). It functions in the pathway tRNA modification; tRNA-queuosine biosynthesis. Functionally, catalyzes the NADPH-dependent reduction of 7-cyano-7-deazaguanine (preQ0) to 7-aminomethyl-7-deazaguanine (preQ1). In Sinorhizobium medicae (strain WSM419) (Ensifer medicae), this protein is NADPH-dependent 7-cyano-7-deazaguanine reductase.